Here is a 660-residue protein sequence, read N- to C-terminus: Galactocerebrosidase (660 aa).

The N-terminal stretch at 1–18 (MQTHNFLCIISVILGCSA) is a signal peptide. Residues Thr87 and Trp129 each contribute to the substrate site. The N-linked (GlcNAc...) asparagine glycan is linked to Asn147. Position 175 (Asn175) interacts with substrate. Glu176 (proton donor/acceptor) is an active-site residue. Glu251 acts as the Nucleophile in catalysis. Cys264 and Cys371 are disulfide-bonded. N-linked (GlcNAc...) asparagine glycosylation is found at Asn293 and Asn356. Substrate is bound at residue Arg373. Residues Asn413, Asn465, Asn495, Asn499, Asn537, and Asn578 are each glycosylated (N-linked (GlcNAc...) asparagine).

This sequence belongs to the glycosyl hydrolase 59 family.

The protein localises to the lysosome. The enzyme catalyses a beta-D-galactosyl-(1&lt;-&gt;1')-N-acylsphing-4-enine + H2O = an N-acylsphing-4-enine + D-galactose. It carries out the reaction beta-D-galactosyl-(1&lt;-&gt;1)-sphing-4-enine + H2O = sphing-4-enine + D-galactose. It catalyses the reaction a D-galactosylceramide + H2O = an N-acyl-sphingoid base + D-galactose. Functionally, hydrolyzes the galactose ester bonds of glycolipids such as galactosylceramide and galactosylsphingosine. This chain is Galactocerebrosidase, found in Danio rerio (Zebrafish).